Reading from the N-terminus, the 242-residue chain is MKITNLVDKKLASDYVAIELLKLIKDKPDAILGLATGGTMTDVYPRFSELLSANHVDLANVQTFNLDEYVGLEPEHAQSYHTYMHQLLFDHNASWNADNIHIPQGHVDDLEREARRYENQLKQIGQPDIQLLGIGENGHIGFNEPGTSFESETRVVDLTESTINANSVHFDHIDDVPKQAVSMGLNSIMRAKRIILLAFGERKRDAIHQLLNGETNESLPASILHQHPNVEIIVDDTIFNRL.

Asp67 functions as the Proton acceptor; for enolization step in the catalytic mechanism. The active-site For ring-opening step is the Asn137. Residue His139 is the Proton acceptor; for ring-opening step of the active site. The active-site For ring-opening step is the Glu144.

Belongs to the glucosamine/galactosamine-6-phosphate isomerase family. NagB subfamily.

It carries out the reaction alpha-D-glucosamine 6-phosphate + H2O = beta-D-fructose 6-phosphate + NH4(+). The protein operates within amino-sugar metabolism; N-acetylneuraminate degradation; D-fructose 6-phosphate from N-acetylneuraminate: step 5/5. Catalyzes the reversible isomerization-deamination of glucosamine 6-phosphate (GlcN6P) to form fructose 6-phosphate (Fru6P) and ammonium ion. This chain is Glucosamine-6-phosphate deaminase, found in Staphylococcus haemolyticus (strain JCSC1435).